The chain runs to 264 residues: ATP synthase subunit a (264 aa).

Helical transmembrane passes span 29–49 (TWHI…LWLF), 89–109 (VIAP…FMDM), 134–154 (DLNI…YYSI), 177–197 (IPVN…SLAL), 208–228 (LIFI…TLGV), and 235–255 (LIFH…LTIV).

It belongs to the ATPase A chain family. As to quaternary structure, F-type ATPases have 2 components, CF(1) - the catalytic core - and CF(0) - the membrane proton channel. CF(1) has five subunits: alpha(3), beta(3), gamma(1), delta(1), epsilon(1). CF(0) has three main subunits: a(1), b(2) and c(9-12). The alpha and beta chains form an alternating ring which encloses part of the gamma chain. CF(1) is attached to CF(0) by a central stalk formed by the gamma and epsilon chains, while a peripheral stalk is formed by the delta and b chains.

It is found in the cell inner membrane. Key component of the proton channel; it plays a direct role in the translocation of protons across the membrane. The sequence is that of ATP synthase subunit a from Shewanella woodyi (strain ATCC 51908 / MS32).